A 293-amino-acid chain; its full sequence is Probable 2-(5''-triphosphoribosyl)-3'-dephosphocoenzyme-A synthase (293 aa).

It belongs to the CitG/MdcB family.

It carries out the reaction 3'-dephospho-CoA + ATP = 2'-(5''-triphospho-alpha-D-ribosyl)-3'-dephospho-CoA + adenine. Involved in the formation of 2-(5''-phosphoribosyl)-3'-dephosphocoenzyme-A, the prosthetic group of the acyl-carrier protein of the malonate decarboxylase. The chain is Probable 2-(5''-triphosphoribosyl)-3'-dephosphocoenzyme-A synthase from Pseudomonas aeruginosa (strain UCBPP-PA14).